We begin with the raw amino-acid sequence, 248 residues long: Mannose-binding protein C (248 aa).

An N-terminal signal peptide occupies residues 1–20 (MSLFPSLPLLLLSMVAASYS). Residues 42-99 (GINGFPGKDGRDGTKGEKGEPGQGLRGLQGPPGKLGPPGNPGPSGSPGPKGQKGDPGK) form the Collagen-like domain. Positions 43–113 (INGFPGKDGR…DSSLAASERK (71 aa)) are disordered. Proline 47 bears the Hydroxyproline mark. Basic and acidic residues predominate over residues 49 to 61 (KDGRDGTKGEKGE). Proline 73, proline 79, proline 82, and proline 88 each carry hydroxyproline. Residues 75–87 (KLGPPGNPGPSGS) show a composition bias toward pro residues. The span at 93–102 (QKGDPGKSPD) shows a compositional bias: basic and acidic residues. Positions 112–130 (RKALQTEMARIKKWLTFSL) form a coiled coil. The region spanning 134 to 245 (VGNKFFLTNG…CSTSHLAVCE (112 aa)) is the C-type lectin domain. Disulfide bonds link cysteine 155-cysteine 244 and cysteine 222-cysteine 236.

In terms of assembly, oligomeric complex of 3 or more homotrimers. Interacts with MASP1 and MASP2. Interacts with MEP1A and MEP1B and may inhibit their catalytic activity. Interacts with CR1 (via Sushi 24 and Sushi 25 domains). As to quaternary structure, (Microbial infection) Interacts with SARS coronavirus-2/SARS-CoV-2 Spike glycoprotein homotrimer; the interaction is calcium-dependent and modulated by Spike glycoprotein glycosylation state. In terms of tissue distribution, plasma protein produced mainly in the liver.

The protein localises to the secreted. Functionally, calcium-dependent lectin involved in innate immune defense. Binds mannose, fucose and N-acetylglucosamine on different microorganisms and activates the lectin complement pathway. Binds to late apoptotic cells, as well as to apoptotic blebs and to necrotic cells, but not to early apoptotic cells, facilitating their uptake by macrophages. May bind DNA. Upon SARS coronavirus-2/SARS-CoV-2 infection, activates the complement lectin pathway which leads to the inhibition SARS-CoV-2 infection and a reduction of the induced inflammatory response. This Homo sapiens (Human) protein is Mannose-binding protein C.